Consider the following 92-residue polypeptide: UPF0223 protein SZO_10560 (92 aa).

It belongs to the UPF0223 family.

In Streptococcus equi subsp. zooepidemicus (strain H70), this protein is UPF0223 protein SZO_10560.